Here is a 495-residue protein sequence, read N- to C-terminus: Heterogeneous nuclear ribonucleoprotein Q (495 aa).

Residues 1 to 10 (MSDARDNDDR) are compositionally biased toward basic and acidic residues. The interval 1-101 (MSDARDNDDR…KPPSPIDDED (101 aa)) is disordered. Composition is skewed to acidic residues over residues 11-46 (VDFE…DDDV) and 67-101 (MEDV…DDED). RRM domains lie at 116–194 (SEVF…LSET), 196–278 (NRLF…WADP), and 292–368 (KALY…LAKP). The interval 452–495 (MPMAAAPPQRPRRNDRNNGSSGGSGRDNSHEHDGNRGGRRYRPY) is disordered. Residues 478-487 (DNSHEHDGNR) are compositionally biased toward basic and acidic residues.

In terms of assembly, interacts with LHP1 in the nucleus on a common set of chromatin regions. In terms of tissue distribution, predominantly expressed in vascular and meristematic tissues. Expressed throughout development in seedlings, roots, leaves, floral buds and siliques.

Its subcellular location is the nucleus. It localises to the cytoplasm. It is found in the microsome. Its function is as follows. Transcriptional activator that binds DNA on GAGA-like motif and 5'-(C/G)ACGTG(G/T)C(A/G)-3' consensus motif in the promoters of target genes. Component of ribonucleosomes, which are complexes of at least 20 other different heterogeneous nuclear ribonucleoproteins (hnRNP). hnRNP play an important role in processing of precursor mRNA in the nucleus. Required during flower development and for cell fate determination. Acts both as an antagonist and as a promoter of polycomb LHP1 gene regulation activity, depending of target genes, to regulate the transcription of stress-responsive and flowering genes. May regulate histone H3 trimethylation on lysine 27 (H3K27me3). Recognizes and binds histone H3 tails methylated at 'Lys-4' (H3K4me) and acetylated at 'Lys-9' (H3K9ac), leading to epigenetic activation. When in complex with LHP1, recognizes and binds histone H3 tails methylated at 'Lys-4' (H3K4me) and 'Lys-27' (H3K27me), mostly corresponding to stress-responsive genes. May function as a suppressor of cell-autonomous immune responses involving glucosinolates, salicylic acid (SA) and jasmonic acid (JA) pathways toward pathogenic bacteria and fungi. The chain is Heterogeneous nuclear ribonucleoprotein Q from Arabidopsis thaliana (Mouse-ear cress).